The sequence spans 131 residues: Small ribosomal subunit protein uS8 (131 aa).

The protein belongs to the universal ribosomal protein uS8 family. Part of the 30S ribosomal subunit. Contacts proteins S5 and S12.

One of the primary rRNA binding proteins, it binds directly to 16S rRNA central domain where it helps coordinate assembly of the platform of the 30S subunit. This is Small ribosomal subunit protein uS8 from Alkalilimnicola ehrlichii (strain ATCC BAA-1101 / DSM 17681 / MLHE-1).